The following is a 465-amino-acid chain: 3-isopropylmalate dehydratase large subunit (465 aa).

3 residues coordinate [4Fe-4S] cluster: C346, C406, and C409.

It belongs to the aconitase/IPM isomerase family. LeuC type 1 subfamily. As to quaternary structure, heterodimer of LeuC and LeuD. It depends on [4Fe-4S] cluster as a cofactor.

The catalysed reaction is (2R,3S)-3-isopropylmalate = (2S)-2-isopropylmalate. Its pathway is amino-acid biosynthesis; L-leucine biosynthesis; L-leucine from 3-methyl-2-oxobutanoate: step 2/4. Its function is as follows. Catalyzes the isomerization between 2-isopropylmalate and 3-isopropylmalate, via the formation of 2-isopropylmaleate. This is 3-isopropylmalate dehydratase large subunit from Leptospira interrogans serogroup Icterohaemorrhagiae serovar copenhageni (strain Fiocruz L1-130).